The sequence spans 193 residues: MSDTAPVSVPPVLPKSDLNFVWLDCEMTGLDPEKDRLLEIAVVVTGPELEPRVEGPVFAIHQSDALLDGMDAWNKGTHGRSGLIEKVRASTVTEAEAEQAILEFLARYVRKGVAPMCGNSIGQDRRFLVRYMPKLEAFFHYRNVDVSTLKELSRRWKPEVYASFKKAQKHTALADVHESIEELAHYRKHLLVP.

The Exonuclease domain occupies 20-183; it reads FVWLDCEMTG…ADVHESIEEL (164 aa). Y141 is an active-site residue.

Belongs to the oligoribonuclease family.

It is found in the cytoplasm. 3'-to-5' exoribonuclease specific for small oligoribonucleotides. The polypeptide is Oligoribonuclease (Paracidovorax citrulli (strain AAC00-1) (Acidovorax citrulli)).